A 518-amino-acid polypeptide reads, in one-letter code: 12S seed storage globulin 2 (518 aa).

The N-terminal stretch at 1-24 is a signal peptide; it reads MATTRFPSLLFYSYIFLLCNGSMA. 2 disulfides stabilise this stretch: C45–C78 and C121–C324. One can recognise a Cupin type-1 1 domain in the interval 50–240; sequence LQAFEPLRQV…ALGISQQVAQ (191 aa). Residues 280 to 311 form a disordered region; sequence IQSQEEQSTQYQVGQSPQYQEGQSTQYQPGQS. The Cupin type-1 2 domain occupies 330–479; sequence QNIENPKRAD…AYRISRQEAQ (150 aa). Residues 482 to 518 form a disordered region; sequence KNNRGEEFDAFTPKFTQTGSQSYQDEGESSSTEKASE. Residues 495–518 show a composition bias toward polar residues; that stretch reads KFTQTGSQSYQDEGESSSTEKASE.

This sequence belongs to the 11S seed storage protein (globulins) family. As to quaternary structure, hexamer; each subunit is composed of an acidic and a basic chain derived from a single precursor and linked by a disulfide bond.

Functionally, this is a seed storage protein. The sequence is that of 12S seed storage globulin 2 from Avena sativa (Oat).